Reading from the N-terminus, the 204-residue chain is Probable nicotinate-nucleotide adenylyltransferase (204 aa).

This sequence belongs to the NadD family.

It catalyses the reaction nicotinate beta-D-ribonucleotide + ATP + H(+) = deamido-NAD(+) + diphosphate. It functions in the pathway cofactor biosynthesis; NAD(+) biosynthesis; deamido-NAD(+) from nicotinate D-ribonucleotide: step 1/1. In terms of biological role, catalyzes the reversible adenylation of nicotinate mononucleotide (NaMN) to nicotinic acid adenine dinucleotide (NaAD). This chain is Probable nicotinate-nucleotide adenylyltransferase, found in Dehalococcoides mccartyi (strain ATCC BAA-2266 / KCTC 15142 / 195) (Dehalococcoides ethenogenes (strain 195)).